A 376-amino-acid chain; its full sequence is Neuropeptide receptor 3 (376 aa).

Over 1 to 29 the chain is Extracellular; the sequence is MEGGRNCVMTVQQWQPEYNDMNQIRAIFS. The helical transmembrane segment at 30-50 threads the bilayer; that stretch reads LLYLLVWVGAIVGNTLVLYVL. Residues 51–66 are Cytoplasmic-facing; it reads TFNQVSLSVRTVFVGC. A helical transmembrane segment spans residues 67 to 87; sequence LAGSDLLMCLFSLPITAISIF. Residues 88–89 are Extracellular-facing; the sequence is SR. Residues 90–110 traverse the membrane as a helical segment; sequence VWVFPAIFCKLIGVFQGGTIF. Cysteine 98 and cysteine 175 are oxidised to a cystine. The Cytoplasmic portion of the chain corresponds to 111-139; the sequence is VSSFTLTVIALDRCVLILRPNQEIVNFPR. A helical transmembrane segment spans residues 140 to 160; that stretch reads AVFIVFCIWLLGYSLALPVGI. At 161–197 the chain is on the extracellular side; sequence YSDIAVYDEICGTFCEENWPDFNPDTGRSGIRRAYGL. Residues 198–218 traverse the membrane as a helical segment; the sequence is SVLVLQFGIPALISSICYWMI. Topologically, residues 219 to 251 are cytoplasmic; sequence SRVMSDQLARRRGHNIRPESETKLVNRKTRANR. The chain crosses the membrane as a helical span at residues 252 to 272; the sequence is MMIVMVVGFVLAWMPFNAVNL. Residues 273 to 284 are Extracellular-facing; sequence YRDLFGISKWYS. The chain crosses the membrane as a helical span at residues 285–305; it reads TVFALCHVCAMCSAVLNPIIY. The Cytoplasmic portion of the chain corresponds to 306–376; that stretch reads SWFNPQFRQS…NDYRAGDQLL (71 aa).

The protein belongs to the G-protein coupled receptor 1 family.

It localises to the cell membrane. In terms of biological role, G-protein coupled receptor for flp-15 neuropeptides. Receptor activation assays suggest binding to predicted flp-15 peptides, GGPQGPLRF-NH2 and RGPSGPLRF-NH2. Likely involved in Gi/Go-coupled signaling pathways. This Caenorhabditis elegans protein is Neuropeptide receptor 3.